The chain runs to 1158 residues: ATP-dependent helicase/deoxyribonuclease subunit B (1158 aa).

The protein belongs to the helicase family. AddB/RexB type 2 subfamily. As to quaternary structure, heterodimer of AddA and RexB. The cofactor is Mg(2+).

The heterodimer acts as both an ATP-dependent DNA helicase and an ATP-dependent, dual-direction single-stranded exonuclease. Recognizes the chi site generating a DNA molecule suitable for the initiation of homologous recombination. This subunit has 5' -&gt; 3' nuclease activity but not helicase activity. The chain is ATP-dependent helicase/deoxyribonuclease subunit B from Lactobacillus johnsonii (strain CNCM I-12250 / La1 / NCC 533).